A 309-amino-acid chain; its full sequence is Sulfate adenylyltransferase subunit 2 (309 aa).

This sequence belongs to the PAPS reductase family. CysD subfamily. In terms of assembly, heterodimer composed of CysD, the smaller subunit, and CysN.

It catalyses the reaction sulfate + ATP + H(+) = adenosine 5'-phosphosulfate + diphosphate. Its pathway is sulfur metabolism; hydrogen sulfide biosynthesis; sulfite from sulfate: step 1/3. Its function is as follows. With CysN forms the ATP sulfurylase (ATPS) that catalyzes the adenylation of sulfate producing adenosine 5'-phosphosulfate (APS) and diphosphate, the first enzymatic step in sulfur assimilation pathway. APS synthesis involves the formation of a high-energy phosphoric-sulfuric acid anhydride bond driven by GTP hydrolysis by CysN coupled to ATP hydrolysis by CysD. The protein is Sulfate adenylyltransferase subunit 2 of Methylorubrum extorquens (strain CM4 / NCIMB 13688) (Methylobacterium extorquens).